The sequence spans 656 residues: uncharacterized protein (656 aa).

The interval 623 to 656 is disordered; the sequence is EIDIPGTPASIDPEWSRPPGSITDDHVFDAPLHR. The segment covering 645-656 has biased composition (basic and acidic residues); sequence TDDHVFDAPLHR.

This is an uncharacterized protein from Mycobacterium tuberculosis (strain ATCC 25618 / H37Rv).